The chain runs to 482 residues: Anaerobic nitric oxide reductase flavorubredoxin (482 aa).

Positions 30 to 210 (LRGSSYNSYL…PFSRLVTPKI (181 aa)) are zinc metallo-hydrolase. Fe cation is bound by residues His-79, Glu-81, Asp-83, His-147, Asp-166, and His-227. The Flavodoxin-like domain occupies 254-393 (ITLFYDTMSN…ICRQHGREIA (140 aa)). FMN-binding positions include 260 to 264 (TMSNN) and 342 to 369 (AFGS…EMSM). Residues 426–477 (GPCMQCSVCQWVYDPALGEPLQDVAPGTPWSDVPDNFLCPECSLGKDVFDVL) form the Rubredoxin-like domain. The Fe cation site is built by Cys-431, Cys-434, Cys-464, and Cys-467.

The protein in the N-terminal section; belongs to the zinc metallo-hydrolase group 3 family. As to quaternary structure, homotetramer. Fe cation serves as cofactor. It depends on FMN as a cofactor.

It is found in the cytoplasm. It participates in nitrogen metabolism; nitric oxide reduction. Functionally, anaerobic nitric oxide reductase; uses NADH to detoxify nitric oxide (NO), protecting several 4Fe-4S NO-sensitive enzymes. Has at least 2 reductase partners, only one of which (NorW, flavorubredoxin reductase) has been identified. NO probably binds to the di-iron center; electrons enter from the NorW at rubredoxin and are transferred sequentially to the FMN center and the di-iron center. Also able to function as an aerobic oxygen reductase. The polypeptide is Anaerobic nitric oxide reductase flavorubredoxin (Enterobacter sp. (strain 638)).